Here is a 158-residue protein sequence, read N- to C-terminus: Rhombotin-2 (158 aa).

LIM zinc-binding domains lie at 30-89 and 94-153; these read CGGC…RLFG and CASC…EWTK.

As to quaternary structure, interacts via its LIM domains with ELF2 and LDB1. Interacts with BEX2 and KDM5A. Also interacts with basic helix-loop-helix protein TAL1/SCL and can assemble in a complex with LMO2 and TAL1/SCL.

It localises to the nucleus. Functionally, acts with TAL1/SCL to regulate red blood cell development. Also acts with LDB1 to maintain erythroid precursors in an immature state. This is Rhombotin-2 (LMO2) from Bos taurus (Bovine).